Reading from the N-terminus, the 177-residue chain is Large ribosomal subunit protein uL6 (177 aa).

Position 44 is an N6-acetyllysine (K44).

The protein belongs to the universal ribosomal protein uL6 family. As to quaternary structure, part of the 50S ribosomal subunit.

Functionally, this protein binds to the 23S rRNA, and is important in its secondary structure. It is located near the subunit interface in the base of the L7/L12 stalk, and near the tRNA binding site of the peptidyltransferase center. The sequence is that of Large ribosomal subunit protein uL6 from Escherichia fergusonii (strain ATCC 35469 / DSM 13698 / CCUG 18766 / IAM 14443 / JCM 21226 / LMG 7866 / NBRC 102419 / NCTC 12128 / CDC 0568-73).